Here is a 76-residue protein sequence, read N- to C-terminus: Conotoxin MaIr332 (76 aa).

A signal peptide spans 1-21 (MKLTCVIVAVLFLTAWTFVTA). The propeptide occupies 22 to 48 (DDSGNGLENLFSKAHHEMKNPKDSKLN). 3 disulfide bridges follow: Cys-51/Cys-66, Cys-58/Cys-70, and Cys-65/Cys-75.

It belongs to the conotoxin O1 superfamily. As to expression, expressed by the venom duct.

The protein resides in the secreted. In Conus marmoreus (Marble cone), this protein is Conotoxin MaIr332.